The sequence spans 549 residues: Glucose-6-phosphate isomerase (549 aa).

N6-acetyllysine occurs at positions 80, 228, and 234. E355 acts as the Proton donor in catalysis. Active-site residues include H386 and K514.

This sequence belongs to the GPI family.

It is found in the cytoplasm. It catalyses the reaction alpha-D-glucose 6-phosphate = beta-D-fructose 6-phosphate. Its pathway is carbohydrate biosynthesis; gluconeogenesis. It functions in the pathway carbohydrate degradation; glycolysis; D-glyceraldehyde 3-phosphate and glycerone phosphate from D-glucose: step 2/4. Its function is as follows. Catalyzes the reversible isomerization of glucose-6-phosphate to fructose-6-phosphate. This is Glucose-6-phosphate isomerase from Escherichia fergusonii (strain ATCC 35469 / DSM 13698 / CCUG 18766 / IAM 14443 / JCM 21226 / LMG 7866 / NBRC 102419 / NCTC 12128 / CDC 0568-73).